Consider the following 403-residue polypeptide: Dual-specificity RNA methyltransferase RlmN (403 aa).

The active-site Proton acceptor is glutamate 121. Positions glutamate 127–leucine 375 constitute a Radical SAM core domain. Cysteine 134 and cysteine 378 are disulfide-bonded. Positions 141, 145, and 148 each coordinate [4Fe-4S] cluster. Residues glycine 204–glutamate 205, serine 236, serine 258–histidine 260, and asparagine 335 contribute to the S-adenosyl-L-methionine site. The S-methylcysteine intermediate role is filled by cysteine 378.

This sequence belongs to the radical SAM superfamily. RlmN family. Requires [4Fe-4S] cluster as cofactor.

The protein localises to the cytoplasm. It catalyses the reaction adenosine(2503) in 23S rRNA + 2 reduced [2Fe-2S]-[ferredoxin] + 2 S-adenosyl-L-methionine = 2-methyladenosine(2503) in 23S rRNA + 5'-deoxyadenosine + L-methionine + 2 oxidized [2Fe-2S]-[ferredoxin] + S-adenosyl-L-homocysteine. The enzyme catalyses adenosine(37) in tRNA + 2 reduced [2Fe-2S]-[ferredoxin] + 2 S-adenosyl-L-methionine = 2-methyladenosine(37) in tRNA + 5'-deoxyadenosine + L-methionine + 2 oxidized [2Fe-2S]-[ferredoxin] + S-adenosyl-L-homocysteine. Its function is as follows. Specifically methylates position 2 of adenine 2503 in 23S rRNA and position 2 of adenine 37 in tRNAs. m2A2503 modification seems to play a crucial role in the proofreading step occurring at the peptidyl transferase center and thus would serve to optimize ribosomal fidelity. This is Dual-specificity RNA methyltransferase RlmN from Rhodopseudomonas palustris (strain BisA53).